Consider the following 401-residue polypeptide: Argininosuccinate synthase (401 aa).

9–17 (AYSGGLDTS) contacts ATP. Y86 provides a ligand contact to L-citrulline. G116 lines the ATP pocket. L-aspartate contacts are provided by T118, N122, and D123. N122 contacts L-citrulline. R126, S174, S183, E259, and Y271 together coordinate L-citrulline.

It belongs to the argininosuccinate synthase family. Type 1 subfamily. In terms of assembly, homotetramer.

It is found in the cytoplasm. It carries out the reaction L-citrulline + L-aspartate + ATP = 2-(N(omega)-L-arginino)succinate + AMP + diphosphate + H(+). It functions in the pathway amino-acid biosynthesis; L-arginine biosynthesis; L-arginine from L-ornithine and carbamoyl phosphate: step 2/3. The polypeptide is Argininosuccinate synthase (Bacillus cereus (strain AH820)).